We begin with the raw amino-acid sequence, 567 residues long: Proline--tRNA ligase (567 aa).

The protein belongs to the class-II aminoacyl-tRNA synthetase family. ProS type 1 subfamily. Homodimer.

It localises to the cytoplasm. It carries out the reaction tRNA(Pro) + L-proline + ATP = L-prolyl-tRNA(Pro) + AMP + diphosphate. In terms of biological role, catalyzes the attachment of proline to tRNA(Pro) in a two-step reaction: proline is first activated by ATP to form Pro-AMP and then transferred to the acceptor end of tRNA(Pro). As ProRS can inadvertently accommodate and process non-cognate amino acids such as alanine and cysteine, to avoid such errors it has two additional distinct editing activities against alanine. One activity is designated as 'pretransfer' editing and involves the tRNA(Pro)-independent hydrolysis of activated Ala-AMP. The other activity is designated 'posttransfer' editing and involves deacylation of mischarged Ala-tRNA(Pro). The misacylated Cys-tRNA(Pro) is not edited by ProRS. In Staphylococcus aureus (strain USA300), this protein is Proline--tRNA ligase.